The primary structure comprises 397 residues: Proteasome-activating nucleotidase (397 aa).

The stretch at 15-58 (DYVTFLKRRIRQLELQVRTLEADKERLERELSRLRMEMSRLRQP) forms a coiled coil. Residues 182 to 187 (GCGKTL) and H321 contribute to the ATP site. The interval 395 to 397 (MYG) is docks into pockets in the proteasome alpha-ring to cause gate opening.

It belongs to the AAA ATPase family. In terms of assembly, homohexamer. The hexameric complex has a two-ring architecture resembling a top hat that caps the 20S proteasome core at one or both ends. Upon ATP-binding, the C-terminus of PAN interacts with the alpha-rings of the proteasome core by binding to the intersubunit pockets.

It localises to the cytoplasm. Functionally, ATPase which is responsible for recognizing, binding, unfolding and translocation of substrate proteins into the archaeal 20S proteasome core particle. Is essential for opening the gate of the 20S proteasome via an interaction with its C-terminus, thereby allowing substrate entry and access to the site of proteolysis. Thus, the C-termini of the proteasomal ATPase function like a 'key in a lock' to induce gate opening and therefore regulate proteolysis. Unfolding activity requires energy from ATP hydrolysis, whereas ATP binding alone promotes ATPase-20S proteasome association which triggers gate opening, and supports translocation of unfolded substrates. In Thermococcus kodakarensis (strain ATCC BAA-918 / JCM 12380 / KOD1) (Pyrococcus kodakaraensis (strain KOD1)), this protein is Proteasome-activating nucleotidase.